The following is a 535-amino-acid chain: Protoheme IX farnesyltransferase (535 aa).

Residues 1–263 form a unknown region; the sequence is MRRENARVVA…DYVSLTKPGV (263 aa). The next 14 membrane-spanning stretches (helical) occupy residues 18 to 38, 40 to 60, 83 to 103, 127 to 147, 163 to 183, 197 to 217, 262 to 282, 285 to 305, 334 to 354, 357 to 377, 385 to 405, 412 to 432, 474 to 494, and 509 to 529; these read WMVI…SIIP, MTGA…LAMY, YLTL…AGAL, WPAL…AALA, VACA…QVLL, LTHL…VTLA, GVIS…PAGI, WSLV…SHSI, HALA…AIFV, LTAL…TIWL, IVIG…AVTG, LLLW…LALI, LLGM…GLFL, and AWAL…AMVV. Residues 264–535 are protoheme IX prenyltransferase; sequence ISLLILTTIT…AMVVDRAVFA (272 aa).

In the C-terminal section; belongs to the UbiA prenyltransferase family. Protoheme IX farnesyltransferase subfamily.

Its subcellular location is the cell membrane. The catalysed reaction is heme b + (2E,6E)-farnesyl diphosphate + H2O = Fe(II)-heme o + diphosphate. The protein operates within porphyrin-containing compound metabolism; heme O biosynthesis; heme O from protoheme: step 1/1. Functionally, converts heme B (protoheme IX) to heme O by substitution of the vinyl group on carbon 2 of heme B porphyrin ring with a hydroxyethyl farnesyl side group. This chain is Protoheme IX farnesyltransferase (ctaB), found in Roseiflexus castenholzii (strain DSM 13941 / HLO8).